We begin with the raw amino-acid sequence, 321 residues long: GDP-L-fucose synthase (321 aa).

An NADP(+)-binding site is contributed by 14–20 (GGSGLVG). The active-site Proton donor/acceptor is the Tyr-143. NADP(+)-binding positions include Lys-147, 170 to 173 (PTNV), and His-186. The substrate site is built by Lys-194, Trp-208, Arg-215, and Asp-277.

This sequence belongs to the NAD(P)-dependent epimerase/dehydratase family. Fucose synthase subfamily. As to quaternary structure, homodimer.

The catalysed reaction is GDP-beta-L-fucose + NADP(+) = GDP-4-dehydro-alpha-D-rhamnose + NADPH + H(+). The protein operates within nucleotide-sugar biosynthesis; GDP-L-fucose biosynthesis via de novo pathway; GDP-L-fucose from GDP-alpha-D-mannose: step 2/2. Functionally, catalyzes the two-step NADP-dependent conversion of GDP-4-dehydro-6-deoxy-D-mannose to GDP-fucose, involving an epimerase and a reductase reaction. This is GDP-L-fucose synthase (GFUS) from Cricetulus griseus (Chinese hamster).